The following is a 214-amino-acid chain: Uridine kinase (214 aa).

Residue 15–22 coordinates ATP; that stretch reads GASASGKS.

It belongs to the uridine kinase family.

Its subcellular location is the cytoplasm. It carries out the reaction uridine + ATP = UMP + ADP + H(+). The catalysed reaction is cytidine + ATP = CMP + ADP + H(+). Its pathway is pyrimidine metabolism; CTP biosynthesis via salvage pathway; CTP from cytidine: step 1/3. The protein operates within pyrimidine metabolism; UMP biosynthesis via salvage pathway; UMP from uridine: step 1/1. The chain is Uridine kinase from Tolumonas auensis (strain DSM 9187 / NBRC 110442 / TA 4).